Here is a 36-residue protein sequence, read N- to C-terminus: Alpha-amylase inhibitor AI-3688 (36 aa).

Residues C9 and C25 are joined by a disulfide bond.

Functionally, inhibits mammalian alpha-amylases specifically but has no action on plant and microbial alpha-amylases. The sequence is that of Alpha-amylase inhibitor AI-3688 from Kitasatospora aureofaciens (Streptomyces aureofaciens).